The sequence spans 394 residues: MSLLFLDTFAGISGDMFLGLLVDLGVPLPSIQEGLDRLPVTGYQLHQQRTERQHVAACKIIVEHEEQHHHRTWRDIDRMLAESSLKPTVVDLARRIFRRIGEAEAKIHGRALDEVHFHEVGAIDSIVDIVGAAVGLDYLHPDRIVCAPLPLTRGTVHCAHGSFPLPAPATLEILRGLPTVGDTAEVELVTPTGAAIAAETAEFGDLPAMTLERVGYGAGDRQLSDRPNLLRGLLGTADDPWEGETDRITILECHLDDANPEWLGALMEHLLEEGALDVAFAPLQMKKNRPGVHLTVLAPQDKTVALARRILRESTAGGLRYQEATRFKLRRQIERLTTPLGEVHIKLFYEGDKLLRLAPEFDSCQKLAQSSGLPLPEIYRLAEQTAYDFFRKKG.

This sequence belongs to the LarC family.

This is Putative nickel insertion protein from Syntrophotalea carbinolica (strain DSM 2380 / NBRC 103641 / GraBd1) (Pelobacter carbinolicus).